A 190-amino-acid chain; its full sequence is Allergen Alt a 2 (190 aa).

The polypeptide is Allergen Alt a 2 (ALTA2) (Alternaria alternata (Alternaria rot fungus)).